Consider the following 159-residue polypeptide: uncharacterized protein (159 aa).

This is an uncharacterized protein from Methanocaldococcus jannaschii (strain ATCC 43067 / DSM 2661 / JAL-1 / JCM 10045 / NBRC 100440) (Methanococcus jannaschii).